The primary structure comprises 688 residues: PTS system glucoside-specific EIICBA component (688 aa).

The region spanning 3 to 427 (KKLFGQLQRI…FKLKTPGRED (425 aa)) is the PTS EIIC type-1 domain. A run of 10 helical transmembrane segments spans residues 12–32 (IGKALMLPVAILPAAGILLAF), 81–101 (LGLAGGDGVAALAALVGYLIM), 137–157 (LVLGIPTLQTGVFGGIIMGAL), 182–202 (FVPIVTSVVAIATGVLLSFAW), 223–243 (LTTFIFGIIERSLIPFGLHHI), 284–304 (AFTTGKYPFMMFGLPAAAFAI), 315–335 (VVGGLMLSAGLTAFLTGITEP), 340–360 (FLFVAPVLYGIHVLLAGTSFL), 364–384 (LLGVKIGMTFSGGFIDYILYG), and 395–415 (LVIPVGIVYAIVYYFLFDFAI). Residues 438–519 (AKLPFDVLDA…AKIMSGEITK (82 aa)) enclose the PTS EIIB type-1 domain. C460 functions as the Phosphocysteine intermediate; for EIIB activity in the catalytic mechanism. The 105-residue stretch at 560 to 664 (DQVFAGKMMG…SIVTPMIITN (105 aa)) folds into the PTS EIIA type-1 domain. H612 acts as the Tele-phosphohistidine intermediate; for EIIA activity in catalysis.

The protein resides in the cell membrane. Functionally, the phosphoenolpyruvate-dependent sugar phosphotransferase system (sugar PTS), a major carbohydrate active -transport system, catalyzes the phosphorylation of incoming sugar substrates concomitantly with their translocation across the cell membrane. This system is involved in alpha- and beta-glucoside transport. The sequence is that of PTS system glucoside-specific EIICBA component (glcB) from Staphylococcus aureus (strain Mu3 / ATCC 700698).